A 44-amino-acid polypeptide reads, in one-letter code: Cytochrome b559 subunit beta (44 aa).

A helical transmembrane segment spans residues 19–35 (WLAVHTLAVPTVFFIGA). Position 23 (His-23) interacts with heme.

Belongs to the PsbE/PsbF family. As to quaternary structure, heterodimer of an alpha subunit and a beta subunit. PSII is composed of 1 copy each of membrane proteins PsbA, PsbB, PsbC, PsbD, PsbE, PsbF, PsbH, PsbI, PsbJ, PsbK, PsbL, PsbM, PsbT, PsbX, PsbY, PsbZ, Psb30/Ycf12, peripheral proteins PsbO, CyanoQ (PsbQ), PsbU, PsbV and a large number of cofactors. It forms dimeric complexes. It depends on heme b as a cofactor.

Its subcellular location is the cellular thylakoid membrane. This b-type cytochrome is tightly associated with the reaction center of photosystem II (PSII). PSII is a light-driven water:plastoquinone oxidoreductase that uses light energy to abstract electrons from H(2)O, generating O(2) and a proton gradient subsequently used for ATP formation. It consists of a core antenna complex that captures photons, and an electron transfer chain that converts photonic excitation into a charge separation. The sequence is that of Cytochrome b559 subunit beta from Gloeothece citriformis (strain PCC 7424) (Cyanothece sp. (strain PCC 7424)).